The sequence spans 135 residues: ATP synthase epsilon chain (135 aa).

It belongs to the ATPase epsilon chain family. In terms of assembly, F-type ATPases have 2 components, CF(1) - the catalytic core - and CF(0) - the membrane proton channel. CF(1) has five subunits: alpha(3), beta(3), gamma(1), delta(1), epsilon(1). CF(0) has three main subunits: a, b and c.

Its subcellular location is the cell inner membrane. Functionally, produces ATP from ADP in the presence of a proton gradient across the membrane. The protein is ATP synthase epsilon chain of Brucella suis (strain ATCC 23445 / NCTC 10510).